Here is a 210-residue protein sequence, read N- to C-terminus: Two-component response regulator ORR7 (210 aa).

Residues 53 to 92 (VVPLHDNASAEDDDDDEEDDDEDDDDDDDEDDEEEAAPPY) are disordered. Over residues 61 to 88 (SAEDDDDDEEDDDEDDDDDDDEDDEEEA) the composition is skewed to acidic residues. The Response regulatory domain occupies 92–205 (YVMAVDDSSV…VRPADISRIT (114 aa)). At Asp142 the chain carries 4-aspartylphosphate.

It belongs to the ARR family. Type-A subfamily. Two-component system major event consists of a His-to-Asp phosphorelay between a sensor histidine kinase (HK) and a response regulator (RR). In plants, the His-to-Asp phosphorelay involves an additional intermediate named Histidine-containing phosphotransfer protein (HPt). This multistep phosphorelay consists of a His-Asp-His-Asp sequential transfer of a phosphate group between first a His and an Asp of the HK protein, followed by the transfer to a conserved His of the HPt protein and finally the transfer to an Asp in the receiver domain of the RR protein.

Functions as a response regulator involved in His-to-Asp phosphorelay signal transduction system. Phosphorylation of the Asp residue in the receiver domain activates the ability of the protein to promote the transcription of target genes. Type-A response regulators seem to act as negative regulators of the cytokinin signaling. This is Two-component response regulator ORR7 from Oryza sativa subsp. japonica (Rice).